The chain runs to 387 residues: Zinc finger protein neuro-d4 (387 aa).

Glycyl lysine isopeptide (Lys-Gly) (interchain with G-Cter in SUMO2) cross-links involve residues K106, K129, and K133. The C2H2-type zinc-finger motif lies at 195-218 (YVCDICGKRYKNRPGLSYHYTHTH). PHD-type zinc fingers lie at residues 271 to 328 (NGYC…CKSC) and 325 to 375 (CKSC…CLRH). Zn(2+) contacts are provided by C274, C277, C293, C296, H301, C304, C322, C325, C328, C331, C343, C346, H351, C354, C369, and C372.

This sequence belongs to the requiem/DPF family. In terms of assembly, component of neuron-specific chromatin remodeling complex (nBAF complex) composed of at least, ARID1A/BAF250A or ARID1B/BAF250B, SMARCD1/BAF60A, SMARCD3/BAF60C, SMARCA2/BRM/BAF190B, SMARCA4/BRG1/BAF190A, SMARCB1/BAF47, SMARCC1/BAF155, SMARCE1/BAF57, SMARCC2/BAF170, DPF1/BAF45B, DPF3/BAF45C, ACTL6B/BAF53B and actin. As to expression, at embryonic stages, predominant expression in the nervous system. Expressed specifically in postmitotic neurons (at protein level).

The protein resides in the cytoplasm. It is found in the nucleus. May have an important role in developing neurons by participating in regulation of cell survival, possibly as a neurospecific transcription factor. Belongs to the neuron-specific chromatin remodeling complex (nBAF complex). During neural development a switch from a stem/progenitor to a postmitotic chromatin remodeling mechanism occurs as neurons exit the cell cycle and become committed to their adult state. The transition from proliferating neural stem/progenitor cells to postmitotic neurons requires a switch in subunit composition of the npBAF and nBAF complexes. As neural progenitors exit mitosis and differentiate into neurons, npBAF complexes which contain ACTL6A/BAF53A and PHF10/BAF45A, are exchanged for homologous alternative ACTL6B/BAF53B and DPF1/BAF45B or DPF3/BAF45C subunits in neuron-specific complexes (nBAF). The npBAF complex is essential for the self-renewal/proliferative capacity of the multipotent neural stem cells. The nBAF complex along with CREST plays a role regulating the activity of genes essential for dendrite growth. The chain is Zinc finger protein neuro-d4 from Mus musculus (Mouse).